Consider the following 203-residue polypeptide: Pyridoxal 5'-phosphate synthase subunit PdxT (203 aa).

L-glutamine is bound at residue 52-54 (GES). Catalysis depends on cysteine 84, which acts as the Nucleophile. Residues arginine 116 and 144–145 (IR) contribute to the L-glutamine site. Catalysis depends on charge relay system residues histidine 184 and glutamate 186.

It belongs to the glutaminase PdxT/SNO family. In terms of assembly, in the presence of PdxS, forms a dodecamer of heterodimers. Only shows activity in the heterodimer.

The enzyme catalyses aldehydo-D-ribose 5-phosphate + D-glyceraldehyde 3-phosphate + L-glutamine = pyridoxal 5'-phosphate + L-glutamate + phosphate + 3 H2O + H(+). It carries out the reaction L-glutamine + H2O = L-glutamate + NH4(+). Its pathway is cofactor biosynthesis; pyridoxal 5'-phosphate biosynthesis. Catalyzes the hydrolysis of glutamine to glutamate and ammonia as part of the biosynthesis of pyridoxal 5'-phosphate. The resulting ammonia molecule is channeled to the active site of PdxS. The chain is Pyridoxal 5'-phosphate synthase subunit PdxT from Aeropyrum pernix (strain ATCC 700893 / DSM 11879 / JCM 9820 / NBRC 100138 / K1).